We begin with the raw amino-acid sequence, 586 residues long: Asparagine synthetase [glutamine-hydrolyzing] 2 (586 aa).

Cys2 (for GATase activity) is an active-site residue. Positions 2–185 (CGILAVLGCS…PGHLYSSKEK (184 aa)) constitute a Glutamine amidotransferase type-2 domain. Residues 50–54 (RLAIV), 75–77 (NGE), and Asp98 each bind L-glutamine. The Asparagine synthetase domain maps to 193–516 (PPWFSEAIPS…PQNSARLSVP (324 aa)). Residues Leu231, Val267, and 341-342 (SG) contribute to the ATP site.

It carries out the reaction L-aspartate + L-glutamine + ATP + H2O = L-asparagine + L-glutamate + AMP + diphosphate + H(+). It participates in amino-acid biosynthesis; L-asparagine biosynthesis; L-asparagine from L-aspartate (L-Gln route): step 1/1. This chain is Asparagine synthetase [glutamine-hydrolyzing] 2 (AS2), found in Lotus japonicus (Lotus corniculatus var. japonicus).